A 301-amino-acid chain; its full sequence is MEHVDKHAVKAFLLSLQDQICQSLESQDKSAAFEQDEWQREQGGGGRSRVLRQGSVFEQAGVNFSHVFGTKMPASATAHRPELAGRSFEAMGVSLVIHPNNPYIPTSHANVRFFIAEKEGEAPVWWFGGGFDLTPFYPFEEDCQHWHNTAKYLCAPFGDDIYEQHKVWCDKYFFLPHRNETRGVGGLFFDDLNEWGFEKSFAYTQAVGNGFIDGYLPIVQRRQDTPYGEREREFQLYRRGRYVEFNLVYDRGTLFGLQSGGRTESILMSMPPLARWEYCYEPKAGSAEADLYENYLQPREW.

Residue S94 participates in substrate binding. A divalent metal cation contacts are provided by H98 and H108. H108 acts as the Proton donor in catalysis. 110-112 (NVR) serves as a coordination point for substrate. Positions 147 and 177 each coordinate a divalent metal cation. An important for dimerization region spans residues 242–277 (YVEFNLVYDRGTLFGLQSGGRTESILMSMPPLARWE). 260–262 (GGR) lines the substrate pocket.

This sequence belongs to the aerobic coproporphyrinogen-III oxidase family. Homodimer. A divalent metal cation serves as cofactor.

It is found in the cytoplasm. The enzyme catalyses coproporphyrinogen III + O2 + 2 H(+) = protoporphyrinogen IX + 2 CO2 + 2 H2O. It functions in the pathway porphyrin-containing compound metabolism; protoporphyrin-IX biosynthesis; protoporphyrinogen-IX from coproporphyrinogen-III (O2 route): step 1/1. Functionally, involved in the heme biosynthesis. Catalyzes the aerobic oxidative decarboxylation of propionate groups of rings A and B of coproporphyrinogen-III to yield the vinyl groups in protoporphyrinogen-IX. This is Oxygen-dependent coproporphyrinogen-III oxidase from Photobacterium profundum (strain SS9).